Consider the following 209-residue polypeptide: Chalcone isomerase-like protein 2 (209 aa).

Belongs to the chalcone isomerase family. As to quaternary structure, component an active demethylxanthohumol (DMX) biosynthetic metabolon in glandular trichomes (lupulin glands) that encompasses a chalcone synthase (CHS) and a membrane-bound prenyltransferase. Interacts with CHS_H1 and PT1L. As to expression, mostly expressed in glandular trichomes (lupulin glands), and, to a lower extent, in cones, cones bracts, leaves, stems and roots.

The protein resides in the cytoplasm. The catalysed reaction is a chalcone = a flavanone.. The protein operates within secondary metabolite biosynthesis; flavonoid biosynthesis. Functionally, involved in the biosynthesis of prenylated phenolics natural products which contribute to the bitter taste of beer and display broad biological activities. Involved in anthocyanin biosynthesis. Polyketide binding proteins (PBP) which promotes the catalytic activities of CHS_H1 and PT1L and triggers demethylxanthohumol (DMX) production. The polypeptide is Chalcone isomerase-like protein 2 (Humulus lupulus (European hop)).